The sequence spans 771 residues: PH and SEC7 domain-containing protein 2 (771 aa).

Disordered stretches follow at residues 1–67 (MEED…PDVA) and 107–136 (GDNASRSLYPDAEDPQLGLDGPGEPDVRDG). Residues 47–66 (GHERRGTPADTEEPTKDPDV) show a composition bias toward basic and acidic residues. Serine 191 bears the Phosphoserine mark. Disordered regions lie at residues 207-230 (GDMGAAGGDGELGSPLRRSISSSR) and 244-307 (PNGF…ANGC). Residues 218–230 (LGSPLRRSISSSR) are compositionally biased toward low complexity. The span at 257 to 266 (GDEDDDEEDT) shows a compositional bias: acidic residues. The 203-residue stretch at 260–462 (DDDEEDTDKL…KTLYNSIKNE (203 aa)) folds into the SEC7 domain. Low complexity predominate over residues 288-299 (ELSSSEGLEPGS). The 114-residue stretch at 512-625 (TTYKHGVLTR…WILRINLVAA (114 aa)) folds into the PH domain. The chain crosses the membrane as a helical span at residues 622–639 (LVAAIFSAPAFPAAVSSM). Residues 651-680 (TTRLCQEEQLRSHENKLRQLTAELAEHRCH) adopt a coiled-coil conformation. Residues 739-771 (DDPSLRKTHSSPALSQGHVTGSKTTKDATGPDT) are disordered. The segment covering 748-761 (SSPALSQGHVTGSK) has biased composition (polar residues).

It belongs to the PSD family.

The protein localises to the cell membrane. Its subcellular location is the cell projection. It localises to the ruffle membrane. It is found in the cleavage furrow. The sequence is that of PH and SEC7 domain-containing protein 2 (PSD2) from Homo sapiens (Human).